A 605-amino-acid chain; its full sequence is Mini-chromosome maintenance complex-binding protein (605 aa).

2 positions are modified to phosphoserine: S147 and S150.

The protein belongs to the MCMBP family. Interacts with the MCM complex.

Its subcellular location is the nucleus. Functionally, associated component of the MCM complex that acts as a regulator of DNA replication. Binds to the MCM complex during late S phase and may act by promoting the disassembly of the MCM complex from chromatin. The protein is Mini-chromosome maintenance complex-binding protein of Drosophila melanogaster (Fruit fly).